Consider the following 366-residue polypeptide: UDP-N-acetylglucosamine--N-acetylmuramyl-(pentapeptide) pyrophosphoryl-undecaprenol N-acetylglucosamine transferase (366 aa).

Residues 14-16, Asn128, Arg169, Ser201, Ile251, and Gln296 each bind UDP-N-acetyl-alpha-D-glucosamine; that span reads TGG.

The protein belongs to the glycosyltransferase 28 family. MurG subfamily.

The protein localises to the cell inner membrane. It carries out the reaction di-trans,octa-cis-undecaprenyl diphospho-N-acetyl-alpha-D-muramoyl-L-alanyl-D-glutamyl-meso-2,6-diaminopimeloyl-D-alanyl-D-alanine + UDP-N-acetyl-alpha-D-glucosamine = di-trans,octa-cis-undecaprenyl diphospho-[N-acetyl-alpha-D-glucosaminyl-(1-&gt;4)]-N-acetyl-alpha-D-muramoyl-L-alanyl-D-glutamyl-meso-2,6-diaminopimeloyl-D-alanyl-D-alanine + UDP + H(+). It functions in the pathway cell wall biogenesis; peptidoglycan biosynthesis. Its function is as follows. Cell wall formation. Catalyzes the transfer of a GlcNAc subunit on undecaprenyl-pyrophosphoryl-MurNAc-pentapeptide (lipid intermediate I) to form undecaprenyl-pyrophosphoryl-MurNAc-(pentapeptide)GlcNAc (lipid intermediate II). The polypeptide is UDP-N-acetylglucosamine--N-acetylmuramyl-(pentapeptide) pyrophosphoryl-undecaprenol N-acetylglucosamine transferase (Christiangramia forsetii (strain DSM 17595 / CGMCC 1.15422 / KT0803) (Gramella forsetii)).